A 354-amino-acid chain; its full sequence is UDP-N-acetylglucosamine--N-acetylmuramyl-(pentapeptide) pyrophosphoryl-undecaprenol N-acetylglucosamine transferase (354 aa).

UDP-N-acetyl-alpha-D-glucosamine is bound by residues 11-13 (SAG), arginine 164, serine 194, and glutamine 289.

This sequence belongs to the glycosyltransferase 28 family. MurG subfamily.

The protein resides in the cell membrane. It carries out the reaction di-trans,octa-cis-undecaprenyl diphospho-N-acetyl-alpha-D-muramoyl-L-alanyl-D-glutamyl-meso-2,6-diaminopimeloyl-D-alanyl-D-alanine + UDP-N-acetyl-alpha-D-glucosamine = di-trans,octa-cis-undecaprenyl diphospho-[N-acetyl-alpha-D-glucosaminyl-(1-&gt;4)]-N-acetyl-alpha-D-muramoyl-L-alanyl-D-glutamyl-meso-2,6-diaminopimeloyl-D-alanyl-D-alanine + UDP + H(+). The protein operates within cell wall biogenesis; peptidoglycan biosynthesis. Its function is as follows. Cell wall formation. Catalyzes the transfer of a GlcNAc subunit on undecaprenyl-pyrophosphoryl-MurNAc-pentapeptide (lipid intermediate I) to form undecaprenyl-pyrophosphoryl-MurNAc-(pentapeptide)GlcNAc (lipid intermediate II). This Shouchella clausii (strain KSM-K16) (Alkalihalobacillus clausii) protein is UDP-N-acetylglucosamine--N-acetylmuramyl-(pentapeptide) pyrophosphoryl-undecaprenol N-acetylglucosamine transferase.